A 124-amino-acid chain; its full sequence is Small ribosomal subunit protein uS12 (124 aa).

The disordered stretch occupies residues 1–32; it reads MPTIQQLVRKGRKDKATKTKTPALKGSPQRRG. Asp89 is modified (3-methylthioaspartic acid). Residues 105–124 form a disordered region; the sequence is QGVRGRQQARSRYGAKKEKK. A compositionally biased stretch (basic residues) spans 111–124; that stretch reads QQARSRYGAKKEKK.

This sequence belongs to the universal ribosomal protein uS12 family. Part of the 30S ribosomal subunit. Contacts proteins S8 and S17. May interact with IF1 in the 30S initiation complex.

Functionally, with S4 and S5 plays an important role in translational accuracy. Interacts with and stabilizes bases of the 16S rRNA that are involved in tRNA selection in the A site and with the mRNA backbone. Located at the interface of the 30S and 50S subunits, it traverses the body of the 30S subunit contacting proteins on the other side and probably holding the rRNA structure together. The combined cluster of proteins S8, S12 and S17 appears to hold together the shoulder and platform of the 30S subunit. The polypeptide is Small ribosomal subunit protein uS12 (Beutenbergia cavernae (strain ATCC BAA-8 / DSM 12333 / CCUG 43141 / JCM 11478 / NBRC 16432 / NCIMB 13614 / HKI 0122)).